The sequence spans 463 residues: Asparagine--tRNA ligase (463 aa).

The protein belongs to the class-II aminoacyl-tRNA synthetase family. In terms of assembly, homodimer.

Its subcellular location is the cytoplasm. The catalysed reaction is tRNA(Asn) + L-asparagine + ATP = L-asparaginyl-tRNA(Asn) + AMP + diphosphate + H(+). The polypeptide is Asparagine--tRNA ligase (Bacillus cereus (strain ZK / E33L)).